The following is a 153-amino-acid chain: DNA gyrase inhibitor 1 (153 aa).

Belongs to the DNA gyrase inhibitor family. Interacts with DNA gyrase.

Its subcellular location is the cytoplasm. Inhibits the supercoiling activity of DNA gyrase. Acts by inhibiting DNA gyrase at an early step, prior to (or at the step of) binding of DNA by the gyrase. It protects cells against toxins that target DNA gyrase, by inhibiting activity of these toxins and reducing the formation of lethal double-strand breaks in the cell. This is DNA gyrase inhibitor 1 from Dickeya dadantii (strain 3937) (Erwinia chrysanthemi (strain 3937)).